The following is a 427-amino-acid chain: Serine--tRNA ligase (427 aa).

Residue 232–234 (TAE) coordinates L-serine. 263-265 (RSE) serves as a coordination point for ATP. Glutamate 286 is a binding site for L-serine. ATP is bound at residue 350 to 353 (EISS). Serine 385 contacts L-serine.

The protein belongs to the class-II aminoacyl-tRNA synthetase family. Type-1 seryl-tRNA synthetase subfamily. In terms of assembly, homodimer. The tRNA molecule binds across the dimer.

The protein localises to the cytoplasm. It carries out the reaction tRNA(Ser) + L-serine + ATP = L-seryl-tRNA(Ser) + AMP + diphosphate + H(+). It catalyses the reaction tRNA(Sec) + L-serine + ATP = L-seryl-tRNA(Sec) + AMP + diphosphate + H(+). It functions in the pathway aminoacyl-tRNA biosynthesis; selenocysteinyl-tRNA(Sec) biosynthesis; L-seryl-tRNA(Sec) from L-serine and tRNA(Sec): step 1/1. Its function is as follows. Catalyzes the attachment of serine to tRNA(Ser). Is also able to aminoacylate tRNA(Sec) with serine, to form the misacylated tRNA L-seryl-tRNA(Sec), which will be further converted into selenocysteinyl-tRNA(Sec). In Aromatoleum aromaticum (strain DSM 19018 / LMG 30748 / EbN1) (Azoarcus sp. (strain EbN1)), this protein is Serine--tRNA ligase.